Consider the following 150-residue polypeptide: Large ribosomal subunit protein bL9 (150 aa).

The protein belongs to the bacterial ribosomal protein bL9 family.

Its function is as follows. Binds to the 23S rRNA. The chain is Large ribosomal subunit protein bL9 from Latilactobacillus sakei subsp. sakei (strain 23K) (Lactobacillus sakei subsp. sakei).